The following is a 349-amino-acid chain: Protein arginine N-methyltransferase 6 (349 aa).

An SAM-dependent MTase PRMT-type domain is found at 17–324 (DYMYFDSYSD…EENSRHICIR (308 aa)). The S-adenosyl-L-methionine site is built by His-30, Arg-39, Gly-63, Glu-85, and Glu-114. Residues Glu-128 and Glu-137 contribute to the active site.

Belongs to the class I-like SAM-binding methyltransferase superfamily. Protein arginine N-methyltransferase family. PRMT6 subfamily.

The protein localises to the nucleus. The catalysed reaction is L-arginyl-[protein] + 2 S-adenosyl-L-methionine = N(omega),N(omega)-dimethyl-L-arginyl-[protein] + 2 S-adenosyl-L-homocysteine + 2 H(+). Functionally, arginine methyltransferase that can catalyze the formation of both omega-N monomethylarginine (MMA) and asymmetrical dimethylarginine (aDMA), with a strong preference for the formation of aDMA. Preferentially methylates arginyl residues present in a glycine and arginine-rich domain and displays preference for monomethylated substrates. Specifically mediates the asymmetric dimethylation of histone H3 'Arg-2' to form H3R2me2a. H3R2me2a represents a specific tag for epigenetic transcriptional repression and is mutually exclusive with methylation on histone H3 'Lys-4' (H3K4me2 and H3K4me3). Acts as a transcriptional repressor of various genes such as HOXA2, THBS1 and TP53. Repression of TP53 blocks cellular senescence. Also methylates histone H2A and H4 'Arg-3' (H2AR3me and H4R3me, respectively). Acts as a regulator of DNA base excision during DNA repair by mediating the methylation of DNA polymerase beta (POLB), leading to the stimulation of its polymerase activity by enhancing DNA binding and processivity. Methylates HMGA1. Regulates alternative splicing events. Acts as a transcriptional coactivator of a number of steroid hormone receptors including ESR1, ESR2, PGR and NR3C1. The protein is Protein arginine N-methyltransferase 6 (prmt6) of Danio rerio (Zebrafish).